Consider the following 138-residue polypeptide: Acidic phospholipase A2 PL1 (138 aa).

Positions 1–16 are cleaved as a signal peptide; the sequence is MRALWIVAVCLIGAEG. 7 disulfide bridges follow: C42-C131, C44-C60, C59-C111, C65-C138, C66-C104, C73-C97, and C91-C102. Y43, G45, and G47 together coordinate Ca(2+). H63 is an active-site residue. D64 lines the Ca(2+) pocket. D105 is an active-site residue.

The protein belongs to the phospholipase A2 family. Group II subfamily. D49 sub-subfamily. Ca(2+) is required as a cofactor. As to expression, expressed by the venom gland.

The protein resides in the secreted. The enzyme catalyses a 1,2-diacyl-sn-glycero-3-phosphocholine + H2O = a 1-acyl-sn-glycero-3-phosphocholine + a fatty acid + H(+). Its function is as follows. PLA2 catalyzes the calcium-dependent hydrolysis of the 2-acyl groups in 3-sn-phosphoglycerides. This Vipera renardi (Steppe viper) protein is Acidic phospholipase A2 PL1.